Here is a 256-residue protein sequence, read N- to C-terminus: MAVGKNKRLSKGKKGLKKKVVDPFSRKEWYDIKAPSTFENRNVGKTLVNKSTGLKNASDYLKGRVVEVCLADLQGSEDHSFRKVKLRVDEVQGKNLLTNFHGLDLTTDKYRSMVRKWQTLIEANVTVKTADEYVLRVFAIAFTRRQPNQVKKACYAQSSHIRAIRKVISEILTREVQNSTLAQLTSKLIPEVINKEIENATKDIFPLQNVHIRKVKLLKQPKFDLGALMTLHGEASGEEKGKKVASGFKDEILETV.

Alanine 2 is modified (N-acetylalanine; partial).

This sequence belongs to the eukaryotic ribosomal protein eS1 family. In terms of assembly, component of the small ribosomal subunit. Mature ribosomes consist of a small (40S) and a large (60S) subunit. The 40S subunit contains about 33 different proteins and 1 molecule of RNA (18S). The 60S subunit contains about 49 different proteins and 3 molecules of RNA (25S, 5.8S and 5S).

The protein localises to the cytoplasm. This is Small ribosomal subunit protein eS1 from Lachancea thermotolerans (strain ATCC 56472 / CBS 6340 / NRRL Y-8284) (Yeast).